The sequence spans 352 residues: Nicotinate-nucleotide--dimethylbenzimidazole phosphoribosyltransferase (352 aa).

The active-site Proton acceptor is E318.

The protein belongs to the CobT family.

The enzyme catalyses 5,6-dimethylbenzimidazole + nicotinate beta-D-ribonucleotide = alpha-ribazole 5'-phosphate + nicotinate + H(+). It participates in nucleoside biosynthesis; alpha-ribazole biosynthesis; alpha-ribazole from 5,6-dimethylbenzimidazole: step 1/2. In terms of biological role, catalyzes the synthesis of alpha-ribazole-5'-phosphate from nicotinate mononucleotide (NAMN) and 5,6-dimethylbenzimidazole (DMB). In Dehalococcoides mccartyi (strain ATCC BAA-2100 / JCM 16839 / KCTC 5957 / BAV1), this protein is Nicotinate-nucleotide--dimethylbenzimidazole phosphoribosyltransferase.